The primary structure comprises 254 residues: 5'-methylthioadenosine/S-adenosylhomocysteine nucleosidase (254 aa).

Methionine 1 carries the post-translational modification N-acetylmethionine. The active-site Proton acceptor is glutamate 25. S-methyl-5'-thioadenosine is bound by residues threonine 103 and 186 to 189 (KDME). 2 residues coordinate adenine: lysine 186 and aspartate 212. Aspartate 212 functions as the Proton donor in the catalytic mechanism.

The protein belongs to the PNP/UDP phosphorylase family. MtnN subfamily. As to quaternary structure, homodimer.

It carries out the reaction S-methyl-5'-thioadenosine + H2O = 5-(methylsulfanyl)-D-ribose + adenine. It catalyses the reaction S-adenosyl-L-homocysteine + H2O = S-(5-deoxy-D-ribos-5-yl)-L-homocysteine + adenine. The enzyme catalyses 5'-deoxyadenosine + H2O = 5-deoxy-D-ribose + adenine. The protein operates within amino-acid biosynthesis; L-methionine biosynthesis via salvage pathway; S-methyl-5-thio-alpha-D-ribose 1-phosphate from S-methyl-5'-thioadenosine (hydrolase route): step 1/2. In terms of biological role, enzyme of the methionine cycle that catalyzes the irreversible cleavage of the glycosidic bond in 5'-methylthioadenosine (MTA) and S-adenosylhomocysteine (SAH/AdoHcy) to a lesser extent, to adenine and the corresponding thioribose, 5'-methylthioribose and S-ribosylhomocysteine, respectively. Contributes to the maintenance of AdoMet homeostasis and is required to sustain high rates of ethylene synthesis. The sequence is that of 5'-methylthioadenosine/S-adenosylhomocysteine nucleosidase (MTN2) from Arabidopsis thaliana (Mouse-ear cress).